A 227-amino-acid polypeptide reads, in one-letter code: Ribosomal RNA small subunit methyltransferase G (227 aa).

Residues Gly-74, Leu-79, 124–125 (AE), and Arg-142 each bind S-adenosyl-L-methionine.

It belongs to the methyltransferase superfamily. RNA methyltransferase RsmG family.

It localises to the cytoplasm. Functionally, specifically methylates the N7 position of guanine in position 518 of 16S rRNA. In Mycolicibacterium vanbaalenii (strain DSM 7251 / JCM 13017 / BCRC 16820 / KCTC 9966 / NRRL B-24157 / PYR-1) (Mycobacterium vanbaalenii), this protein is Ribosomal RNA small subunit methyltransferase G.